The following is a 292-amino-acid chain: Acetyl-coenzyme A carboxylase carboxyl transferase subunit beta (292 aa).

A CoA carboxyltransferase N-terminal domain is found at 29–292; the sequence is LWSKCPECGQ…HGCLQGSAAV (264 aa). 4 residues coordinate Zn(2+): C33, C36, C52, and C55. A C4-type zinc finger spans residues 33 to 55; that stretch reads CPECGQVVYRKDLLANASVCSNC.

The protein belongs to the AccD/PCCB family. Acetyl-CoA carboxylase is a heterohexamer composed of biotin carboxyl carrier protein (AccB), biotin carboxylase (AccC) and two subunits each of ACCase subunit alpha (AccA) and ACCase subunit beta (AccD). Zn(2+) serves as cofactor.

The protein localises to the cytoplasm. It catalyses the reaction N(6)-carboxybiotinyl-L-lysyl-[protein] + acetyl-CoA = N(6)-biotinyl-L-lysyl-[protein] + malonyl-CoA. It participates in lipid metabolism; malonyl-CoA biosynthesis; malonyl-CoA from acetyl-CoA: step 1/1. Functionally, component of the acetyl coenzyme A carboxylase (ACC) complex. Biotin carboxylase (BC) catalyzes the carboxylation of biotin on its carrier protein (BCCP) and then the CO(2) group is transferred by the transcarboxylase to acetyl-CoA to form malonyl-CoA. This is Acetyl-coenzyme A carboxylase carboxyl transferase subunit beta from Synechococcus sp. (strain WH7803).